The primary structure comprises 346 residues: Biotin synthase (346 aa).

The 219-residue stretch at 38-256 (QQVQVSTLLS…IAVARIMMPT (219 aa)) folds into the Radical SAM core domain. 3 residues coordinate [4Fe-4S] cluster: Cys-53, Cys-57, and Cys-60. 4 residues coordinate [2Fe-2S] cluster: Cys-97, Cys-128, Cys-188, and Arg-260.

Belongs to the radical SAM superfamily. Biotin synthase family. Homodimer. [4Fe-4S] cluster serves as cofactor. [2Fe-2S] cluster is required as a cofactor.

The catalysed reaction is (4R,5S)-dethiobiotin + (sulfur carrier)-SH + 2 reduced [2Fe-2S]-[ferredoxin] + 2 S-adenosyl-L-methionine = (sulfur carrier)-H + biotin + 2 5'-deoxyadenosine + 2 L-methionine + 2 oxidized [2Fe-2S]-[ferredoxin]. Its pathway is cofactor biosynthesis; biotin biosynthesis; biotin from 7,8-diaminononanoate: step 2/2. Catalyzes the conversion of dethiobiotin (DTB) to biotin by the insertion of a sulfur atom into dethiobiotin via a radical-based mechanism. The sequence is that of Biotin synthase from Salmonella dublin (strain CT_02021853).